Reading from the N-terminus, the 213-residue chain is Pyridoxine/pyridoxamine 5'-phosphate oxidase (213 aa).

Substrate-binding positions include 10–13 (REEY) and K68. Residues 63-68 (RMLLLK), 78-79 (FT), K85, and Q107 contribute to the FMN site. The substrate site is built by Y125, R129, and S133. FMN-binding positions include 142–143 (QS) and W186. 192 to 194 (RLH) provides a ligand contact to substrate. R196 provides a ligand contact to FMN.

This sequence belongs to the pyridoxamine 5'-phosphate oxidase family. As to quaternary structure, homodimer. FMN serves as cofactor.

It catalyses the reaction pyridoxamine 5'-phosphate + O2 + H2O = pyridoxal 5'-phosphate + H2O2 + NH4(+). The enzyme catalyses pyridoxine 5'-phosphate + O2 = pyridoxal 5'-phosphate + H2O2. It functions in the pathway cofactor metabolism; pyridoxal 5'-phosphate salvage; pyridoxal 5'-phosphate from pyridoxamine 5'-phosphate: step 1/1. The protein operates within cofactor metabolism; pyridoxal 5'-phosphate salvage; pyridoxal 5'-phosphate from pyridoxine 5'-phosphate: step 1/1. Catalyzes the oxidation of either pyridoxine 5'-phosphate (PNP) or pyridoxamine 5'-phosphate (PMP) into pyridoxal 5'-phosphate (PLP). This is Pyridoxine/pyridoxamine 5'-phosphate oxidase from Nocardioides sp. (strain ATCC BAA-499 / JS614).